The primary structure comprises 524 residues: B3 domain-containing protein Os07g0183700 (524 aa).

2 disordered regions span residues 94-152 (DGEG…TSVS) and 191-232 (PLQP…FQTQ). Residues 100-109 (CAPPPSPIPA) are compositionally biased toward pro residues. Low complexity-rich tracts occupy residues 110-124 (GPAS…SAPA) and 200-232 (AAAA…FQTQ). The segment at residues 336–434 (SFVKPLTYTD…EMFMAVRRTR (99 aa)) is a DNA-binding region (TF-B3).

The protein localises to the nucleus. In Oryza sativa subsp. japonica (Rice), this protein is B3 domain-containing protein Os07g0183700.